We begin with the raw amino-acid sequence, 446 residues long: Coiled-coil domain-containing protein 112 (446 aa).

Coiled coils occupy residues 35-116 (KTER…RKID) and 219-400 (ERKK…NVSR). Disordered regions lie at residues 253–272 (FHNK…KKQK) and 390–430 (LKEK…LLHI). Basic and acidic residues predominate over residues 255–268 (NKQEDNQKQKEEQR).

It is found in the cytoplasm. It localises to the cytoskeleton. Its subcellular location is the microtubule organizing center. The protein localises to the centrosome. The protein resides in the centriolar satellite. In Homo sapiens (Human), this protein is Coiled-coil domain-containing protein 112 (CCDC112).